Reading from the N-terminus, the 419-residue chain is uncharacterized protein (419 aa).

The protein belongs to the MT-A70-like family.

The protein localises to the cytoplasm. This is an uncharacterized protein from Schizosaccharomyces pombe (strain 972 / ATCC 24843) (Fission yeast).